The chain runs to 107 residues: Nucleoid-associated protein A1G_07310 (107 aa).

The protein belongs to the YbaB/EbfC family. As to quaternary structure, homodimer.

It localises to the cytoplasm. The protein resides in the nucleoid. Its function is as follows. Binds to DNA and alters its conformation. May be involved in regulation of gene expression, nucleoid organization and DNA protection. The polypeptide is Nucleoid-associated protein A1G_07310 (Rickettsia rickettsii (strain Sheila Smith)).